A 184-amino-acid polypeptide reads, in one-letter code: Peptidyl-tRNA hydrolase (184 aa).

Tyr-14 provides a ligand contact to tRNA. His-19 serves as the catalytic Proton acceptor. Positions 60 and 62 each coordinate tRNA.

This sequence belongs to the PTH family. In terms of assembly, monomer.

It localises to the cytoplasm. The enzyme catalyses an N-acyl-L-alpha-aminoacyl-tRNA + H2O = an N-acyl-L-amino acid + a tRNA + H(+). In terms of biological role, hydrolyzes ribosome-free peptidyl-tRNAs (with 1 or more amino acids incorporated), which drop off the ribosome during protein synthesis, or as a result of ribosome stalling. Its function is as follows. Catalyzes the release of premature peptidyl moieties from peptidyl-tRNA molecules trapped in stalled 50S ribosomal subunits, and thus maintains levels of free tRNAs and 50S ribosomes. The protein is Peptidyl-tRNA hydrolase of Mesomycoplasma hyopneumoniae (strain 7448) (Mycoplasma hyopneumoniae).